The primary structure comprises 354 residues: Glycine betaine/proline betaine transport system permease protein ProW (354 aa).

The segment at 1–28 (MADQTNPWDTAQVADTTTQTADAWGTPA) is disordered. Residues 1 to 99 (MADQTNPWDT…VDYILNGFQQ (99 aa)) lie on the Cytoplasmic side of the membrane. Positions 9–23 (DTAQVADTTTQTADA) are enriched in low complexity. Residues 100 to 120 (LLLGMPAPVAIILFALIAWQV) traverse the membrane as a helical segment. A topological domain (periplasmic) is located at residue Ser-121. Residues 122 to 142 (GVGMGIATLISLIAIGAIGAW) traverse the membrane as a helical segment. At 143–148 (SQAMIT) the chain is on the cytoplasmic side. The 180-residue stretch at 145-324 (AMITLALVLT…ILAIILDRLT (180 aa)) folds into the ABC transmembrane type-1 domain. A helical membrane pass occupies residues 149-169 (LALVLTALLFCVVIGLPMGIW). Residues 170–198 (LARSPRAAKIVRPLLDAMQTTPAFVYLVP) are Periplasmic-facing. Residues 199 to 219 (IVMLFGIGNVPGVVVTIIFAL) form a helical membrane-spanning segment. Topologically, residues 220–270 (PPIVRLTILGINQVPADLIEASRSFGASPRQMLFKVQLPLAMPTIMAGVNQ) are cytoplasmic. Residues 271 to 291 (TLMLALSMVVIASMIAVGGLG) form a helical membrane-spanning segment. Topologically, residues 292-300 (QMVLRGIGR) are periplasmic. A helical transmembrane segment spans residues 301 to 321 (LDMGLATVGGVGIVILAIILD). Residues 322–354 (RLTQAVGRDSRSRGNRRWYTTGPVGLITRPFVK) lie on the Cytoplasmic side of the membrane.

It belongs to the binding-protein-dependent transport system permease family. CysTW subfamily. As to quaternary structure, the complex is composed of two ATP-binding proteins (ProV), two transmembrane proteins (ProW) and a solute-binding protein (ProX).

The protein resides in the cell inner membrane. In terms of biological role, part of the ProU ABC transporter complex involved in glycine betaine and proline betaine uptake. Probably responsible for the translocation of the substrate across the membrane. The protein is Glycine betaine/proline betaine transport system permease protein ProW of Salmonella typhimurium (strain LT2 / SGSC1412 / ATCC 700720).